The chain runs to 97 residues: DNA/RNA-binding protein Alba (97 aa).

Position 15 is an N6-acetyllysine (Lys-15).

This sequence belongs to the histone-like Alba family. In terms of processing, acetylated. Acetylation at Lys-15 decreases DNA-binding affinity.

The protein localises to the cytoplasm. Its subcellular location is the chromosome. Binds double-stranded DNA tightly but without sequence specificity. Involved in DNA compaction. This chain is DNA/RNA-binding protein Alba, found in Sulfolobus acidocaldarius (strain ATCC 33909 / DSM 639 / JCM 8929 / NBRC 15157 / NCIMB 11770).